The following is a 164-amino-acid chain: Large ribosomal subunit protein uL10 (164 aa).

It belongs to the universal ribosomal protein uL10 family. Part of the ribosomal stalk of the 50S ribosomal subunit. The N-terminus interacts with L11 and the large rRNA to form the base of the stalk. The C-terminus forms an elongated spine to which L12 dimers bind in a sequential fashion forming a multimeric L10(L12)X complex.

Functionally, forms part of the ribosomal stalk, playing a central role in the interaction of the ribosome with GTP-bound translation factors. The chain is Large ribosomal subunit protein uL10 from Aliivibrio salmonicida (strain LFI1238) (Vibrio salmonicida (strain LFI1238)).